A 285-amino-acid chain; its full sequence is Probable endonuclease 4 (285 aa).

Zn(2+) is bound by residues His69, His109, Glu145, Asp179, His182, His216, Asp229, His231, and Glu261.

It belongs to the AP endonuclease 2 family. Zn(2+) serves as cofactor.

It catalyses the reaction Endonucleolytic cleavage to 5'-phosphooligonucleotide end-products.. Functionally, endonuclease IV plays a role in DNA repair. It cleaves phosphodiester bonds at apurinic or apyrimidinic (AP) sites, generating a 3'-hydroxyl group and a 5'-terminal sugar phosphate. The chain is Probable endonuclease 4 from Escherichia coli (strain SMS-3-5 / SECEC).